The chain runs to 1153 residues: PPi-type phosphoenolpyruvate carboxykinase 3 (1153 aa).

Residues 1085 to 1131 (RQKLEVAKLNKDLAYLNKTIAEKPRLAETLNKQIAAVKEELQYVSSE) are a coiled coil.

The protein belongs to the PPi-type phosphoenolpyruvate carboxykinase family. In terms of assembly, monomer and trimer; forms heterotrimers with PEPCK1 and PEPCK2.

The protein resides in the cytoplasm. Its subcellular location is the cytosol. The enzyme catalyses oxaloacetate + diphosphate = phosphoenolpyruvate + phosphate + CO2. Inorganic pyrophosphate (PPi)-dependent phosphoenolpyruvate carboxykinase, which regulates the carbon flow of the central metabolism by fixing CO(2) to phosphoenolpyruvate to produce oxaloacetate. Can also produce pyruvate and diphosphate from phosphoenolpyruvate and phosphate. This chain is PPi-type phosphoenolpyruvate carboxykinase 3, found in Entamoeba histolytica (strain ATCC 30459 / HM-1:IMSS / ABRM).